The following is a 285-amino-acid chain: Probable endonuclease 4 (285 aa).

Positions 69, 109, 145, 179, 182, 216, 229, 231, and 261 each coordinate Zn(2+).

It belongs to the AP endonuclease 2 family. The cofactor is Zn(2+).

It carries out the reaction Endonucleolytic cleavage to 5'-phosphooligonucleotide end-products.. In terms of biological role, endonuclease IV plays a role in DNA repair. It cleaves phosphodiester bonds at apurinic or apyrimidinic (AP) sites, generating a 3'-hydroxyl group and a 5'-terminal sugar phosphate. This is Probable endonuclease 4 from Shigella boydii serotype 4 (strain Sb227).